Reading from the N-terminus, the 276-residue chain is uncharacterized protein (276 aa).

The segment at 1–70 (MSKAKSPIKS…SDDDEEDSPN (70 aa)) is disordered. Residues 21–35 (VLREKKVKDAEKAEH) show a composition bias toward basic and acidic residues. In terms of domain architecture, RRM spans 105–183 (GVLYVGRLPH…KLLQCKVIPE (79 aa)). The interval 249-276 (VSHPKAASPVASKKSSKKKNKKVLAAHK) is disordered. Residues 252–261 (PKAASPVASK) are compositionally biased toward low complexity. A compositionally biased stretch (basic residues) spans 262-276 (KSSKKKNKKVLAAHK).

The protein resides in the nucleus. Its subcellular location is the nucleolus. This is an uncharacterized protein from Schizosaccharomyces pombe (strain 972 / ATCC 24843) (Fission yeast).